Consider the following 790-residue polypeptide: Ribosome biogenesis protein ERB1 (790 aa).

A disordered region spans residues Met1–Ser93. Positions Ser20–Asp89 are enriched in acidic residues. A required for interaction with NOP7 region spans residues Arg255 to Asn371. The interval Asn371–Pro407 is required for interaction with YTM1. 7 WD repeats span residues Gly423–His462, Lys470–Glu510, Gln574–Pro616, Lys619–Lys657, Pro660–Lys699, Tyr703–Thr743, and Val759–Thr790.

It belongs to the WD repeat BOP1/ERB1 family. As to quaternary structure, component of the NOP7 complex, composed of ERB1, NOP7 and YTM1. The complex is held together by ERB1, which interacts with NOP7 via its N-terminal domain and with YTM1 via a high-affinity interaction between the seven-bladed beta-propeller domains of the 2 proteins. The NOP7 complex associates with the 66S pre-ribosome.

It localises to the nucleus. The protein resides in the nucleolus. Its subcellular location is the nucleoplasm. In terms of biological role, component of the NOP7 complex, which is required for maturation of the 25S and 5.8S ribosomal RNAs and formation of the 60S ribosome. The polypeptide is Ribosome biogenesis protein ERB1 (Meyerozyma guilliermondii (strain ATCC 6260 / CBS 566 / DSM 6381 / JCM 1539 / NBRC 10279 / NRRL Y-324) (Yeast)).